A 261-amino-acid polypeptide reads, in one-letter code: Cytochrome c oxidase subunit 3 (261 aa).

The Mitochondrial matrix portion of the chain corresponds to 1–15; the sequence is MAHQAHPYHMVDPSP. The helical transmembrane segment at 16–34 threads the bilayer; the sequence is WPLTGATAALLMTSGLAIW. Over 35–40 the chain is Mitochondrial intermembrane; sequence FHFHSL. Residues 41–66 traverse the membrane as a helical segment; sequence LLLYLGLTLLLLTMIQWWRDIIREGT. The Mitochondrial matrix portion of the chain corresponds to 67-72; sequence FQGHHT. The chain crosses the membrane as a helical span at residues 73–105; the sequence is PPVQKGLRYGMILFIVSEVFFFLGFFWAFYHSS. Over 106–128 the chain is Mitochondrial intermembrane; the sequence is LAPTPELGGCWPPTGINPLDPFE. Residues 129 to 152 traverse the membrane as a helical segment; the sequence is VPLLNTAVLLASGVTVTWAHHGLM. Residues 153 to 155 lie on the Mitochondrial matrix side of the membrane; it reads EGN. Residues 156-183 form a helical membrane-spanning segment; it reads RKEAIQALTLTIILGVYFTALQAMEYYE. The Mitochondrial intermembrane portion of the chain corresponds to 184–190; that stretch reads APFTIAD. Residues 191 to 223 traverse the membrane as a helical segment; sequence GVYGTTFFVATGFHGLHVIIGSTFLAVCLLRQV. Topologically, residues 224 to 232 are mitochondrial matrix; the sequence is LYHFTSEHH. The helical transmembrane segment at 233–256 threads the bilayer; sequence FGFEAAAWYWHFVDVVWLFLYVSI. Over 257-261 the chain is Mitochondrial intermembrane; it reads YWWGS.

The protein belongs to the cytochrome c oxidase subunit 3 family. Component of the cytochrome c oxidase (complex IV, CIV), a multisubunit enzyme composed of 14 subunits. The complex is composed of a catalytic core of 3 subunits MT-CO1, MT-CO2 and MT-CO3, encoded in the mitochondrial DNA, and 11 supernumerary subunits COX4I, COX5A, COX5B, COX6A, COX6B, COX6C, COX7A, COX7B, COX7C, COX8 and NDUFA4, which are encoded in the nuclear genome. The complex exists as a monomer or a dimer and forms supercomplexes (SCs) in the inner mitochondrial membrane with NADH-ubiquinone oxidoreductase (complex I, CI) and ubiquinol-cytochrome c oxidoreductase (cytochrome b-c1 complex, complex III, CIII), resulting in different assemblies (supercomplex SCI(1)III(2)IV(1) and megacomplex MCI(2)III(2)IV(2)).

The protein localises to the mitochondrion inner membrane. The enzyme catalyses 4 Fe(II)-[cytochrome c] + O2 + 8 H(+)(in) = 4 Fe(III)-[cytochrome c] + 2 H2O + 4 H(+)(out). Its function is as follows. Component of the cytochrome c oxidase, the last enzyme in the mitochondrial electron transport chain which drives oxidative phosphorylation. The respiratory chain contains 3 multisubunit complexes succinate dehydrogenase (complex II, CII), ubiquinol-cytochrome c oxidoreductase (cytochrome b-c1 complex, complex III, CIII) and cytochrome c oxidase (complex IV, CIV), that cooperate to transfer electrons derived from NADH and succinate to molecular oxygen, creating an electrochemical gradient over the inner membrane that drives transmembrane transport and the ATP synthase. Cytochrome c oxidase is the component of the respiratory chain that catalyzes the reduction of oxygen to water. Electrons originating from reduced cytochrome c in the intermembrane space (IMS) are transferred via the dinuclear copper A center (CU(A)) of subunit 2 and heme A of subunit 1 to the active site in subunit 1, a binuclear center (BNC) formed by heme A3 and copper B (CU(B)). The BNC reduces molecular oxygen to 2 water molecules using 4 electrons from cytochrome c in the IMS and 4 protons from the mitochondrial matrix. This Scyliorhinus canicula (Small-spotted catshark) protein is Cytochrome c oxidase subunit 3 (MT-CO3).